Consider the following 208-residue polypeptide: 28 kDa heat- and acid-stable phosphoprotein homolog (208 aa).

2 disordered regions span residues 1-133 and 145-208; these read MAGG…VTKK and LSRR…LGLA. Positions 16–44 are enriched in basic and acidic residues; that stretch reads FGRDYERSKGKISRDRVYDEEDIIKRNQE. Composition is skewed to low complexity over residues 52–69 and 84–100; these read GSESGSENETKNNNNKSK and RNPNAKKPAAKRPPTTK. A compositionally biased stretch (acidic residues) spans 105-121; the sequence is SDSEDDSDKESDSEDEI. Positions 137–206 form a coiled coil; it reads INVNAKVELS…EKMAERRRLG (70 aa). 2 stretches are compositionally biased toward basic and acidic residues: residues 145-154 and 162-208; these read LSRREKEELA and QNEK…LGLA.

This sequence belongs to the PDAP1 family.

This is 28 kDa heat- and acid-stable phosphoprotein homolog from Dictyostelium discoideum (Social amoeba).